A 139-amino-acid chain; its full sequence is Putative pre-16S rRNA nuclease (139 aa).

The protein belongs to the YqgF nuclease family.

It localises to the cytoplasm. Functionally, could be a nuclease involved in processing of the 5'-end of pre-16S rRNA. The chain is Putative pre-16S rRNA nuclease from Rubrobacter xylanophilus (strain DSM 9941 / JCM 11954 / NBRC 16129 / PRD-1).